We begin with the raw amino-acid sequence, 944 residues long: Leucine--tRNA ligase (944 aa).

The short motif at 40–51 (PYPSGAGLHVGH) is the 'HIGH' region element. The 'KMSKS' region signature appears at 718-722 (KMSKS). Lysine 721 provides a ligand contact to ATP.

The protein belongs to the class-I aminoacyl-tRNA synthetase family.

The protein localises to the cytoplasm. It carries out the reaction tRNA(Leu) + L-leucine + ATP = L-leucyl-tRNA(Leu) + AMP + diphosphate. This chain is Leucine--tRNA ligase, found in Bacteroides thetaiotaomicron (strain ATCC 29148 / DSM 2079 / JCM 5827 / CCUG 10774 / NCTC 10582 / VPI-5482 / E50).